Consider the following 79-residue polypeptide: D-alanyl carrier protein (79 aa).

One can recognise a Carrier domain in the interval 1 to 77 (MDTKQAVLDI…KIIAKVESLR (77 aa)). An O-(pantetheine 4'-phosphoryl)serine modification is found at Ser-35.

Belongs to the DltC family. Post-translationally, 4'-phosphopantetheine is transferred from CoA to a specific serine of apo-DCP.

The protein resides in the cytoplasm. Its pathway is cell wall biogenesis; lipoteichoic acid biosynthesis. Its function is as follows. Carrier protein involved in the D-alanylation of lipoteichoic acid (LTA). The loading of thioester-linked D-alanine onto DltC is catalyzed by D-alanine--D-alanyl carrier protein ligase DltA. The DltC-carried D-alanyl group is further transferred to cell membrane phosphatidylglycerol (PG) by forming an ester bond, probably catalyzed by DltD. D-alanylation of LTA plays an important role in modulating the properties of the cell wall in Gram-positive bacteria, influencing the net charge of the cell wall. In Lactobacillus johnsonii (strain CNCM I-12250 / La1 / NCC 533), this protein is D-alanyl carrier protein.